The primary structure comprises 155 residues: Transcription antitermination protein NusB (155 aa).

It belongs to the NusB family.

Its function is as follows. Involved in transcription antitermination. Required for transcription of ribosomal RNA (rRNA) genes. Binds specifically to the boxA antiterminator sequence of the ribosomal RNA (rrn) operons. This is Transcription antitermination protein NusB from Vibrio parahaemolyticus serotype O3:K6 (strain RIMD 2210633).